The chain runs to 73 residues: Conotoxin CnIIIG (73 aa).

The signal sequence occupies residues 1–19; it reads MSKLGVLLTICLLLLPLTA. Positions 20–48 are excised as a propeptide; it reads LPMDEDQPADQPADRMQDDISSEQYPLFD. Gln-51 is modified (pyrrolidone carboxylic acid). Cystine bridges form between Cys-53–Cys-72, Cys-54–Cys-70, and Cys-60–Cys-73.

This sequence belongs to the conotoxin M superfamily. Expressed by the venom duct.

It is found in the secreted. Functionally, shows a paralytic effect in fish. The sequence is that of Conotoxin CnIIIG from Conus consors (Singed cone).